Reading from the N-terminus, the 273-residue chain is Undecaprenyl-diphosphatase (273 aa).

The next 7 membrane-spanning stretches (helical) occupy residues 4–24 (LILL…FLPI), 43–63 (KAKV…CWEY), 82–102 (FVIN…LFIK), 108–128 (LFHP…ILWA), 183–203 (AAEF…FYDV), 217–237 (MFAT…RGFI), and 248–268 (FAWY…SGLV).

It belongs to the UppP family.

The protein resides in the cell inner membrane. The catalysed reaction is di-trans,octa-cis-undecaprenyl diphosphate + H2O = di-trans,octa-cis-undecaprenyl phosphate + phosphate + H(+). Catalyzes the dephosphorylation of undecaprenyl diphosphate (UPP). Confers resistance to bacitracin. This is Undecaprenyl-diphosphatase from Nitrosomonas europaea (strain ATCC 19718 / CIP 103999 / KCTC 2705 / NBRC 14298).